Consider the following 397-residue polypeptide: L-asparaginase-like protein GD25160 (397 aa).

An N-terminal signal peptide occupies residues 1–22; the sequence is MLAQSCCLRLLILLLLFTSICS. 3 cysteine pairs are disulfide-bonded: Cys90–Cys95, Cys189–Cys205, and Cys344–Cys371.

Belongs to the Ntn-hydrolase family.

This is L-asparaginase-like protein GD25160 from Drosophila simulans (Fruit fly).